Consider the following 409-residue polypeptide: TAR DNA-binding protein 43 (409 aa).

RRM domains follow at residues 105–200 (SDLI…RCTE) and 191–262 (RKVF…TAEP). Disordered stretches follow at residues 260-302 (AEPK…NQGG) and 341-409 (SQQN…GWGM). Residues 261-274 (EPKHNNNRQLERGG) are compositionally biased toward basic and acidic residues. Polar residues predominate over residues 281 to 292 (FGNQGYPNSRPS). 2 stretches are compositionally biased toward low complexity: residues 341 to 387 (SQQN…PNAG) and 395 to 409 (GFSSSMESKSSGWGM).

Homodimer.

Its subcellular location is the nucleus. The protein resides in the cytoplasm. It localises to the stress granule. The protein localises to the mitochondrion. Functionally, probably involved in transcriptional repression. May play a role in the maintenance of the circadian clock periodicity. The chain is TAR DNA-binding protein 43 (tardbp) from Xenopus tropicalis (Western clawed frog).